A 637-amino-acid chain; its full sequence is Palmitoyltransferase Hip14 (637 aa).

Residues 1–295 (MYQSACQAAT…SKLRHDKRLR (295 aa)) lie on the Cytoplasmic side of the membrane. 5 ANK repeats span residues 77-106 (ETVT…TVDA), 111-140 (LNAT…DPRI), 144-173 (EGCS…DPDL), 177-207 (GGMT…NPAM), and 212-242 (HGNT…SLDV). A helical membrane pass occupies residues 296 to 315 (WWSMVACPFTAFYLAGIVFT). The Lumenal segment spans residues 316 to 318 (VNT). Residues 319 to 341 (LYIIKFFLLGCLYSIFHTIGKAL) form a helical membrane-spanning segment. Topologically, residues 342-345 (FDEH) are cytoplasmic. A helical membrane pass occupies residues 346 to 366 (LMALLPLSVYLATKAWFYVTW). Residues 367-373 (LMYIDDA) lie on the Lumenal side of the membrane. The helical transmembrane segment at 374–394 (VSFTATVCFLISSLLLWVCFL) threads the bilayer. The Cytoplasmic portion of the chain corresponds to 395–472 (KSWKGDPGII…VGNCIGLKNH (78 aa)). The DHHC domain maps to 430 to 480 (SFCSGCLVRRPIRSKHCSVCDRCVARFDHHCPWVGNCIGLKNHSYFMGFLW). The S-palmitoyl cysteine intermediate role is filled by Cys-460. The chain crosses the membrane as a helical span at residues 473 to 493 (SYFMGFLWMLLIMCAWMLYGG). The Lumenal portion of the chain corresponds to 494–520 (SKYYVNQCNVRFDDFLGAMRAIGNCDA). Residues 521-541 (WVGWVMGNALLHMSWVILLTI) form a helical membrane-spanning segment. The Cytoplasmic portion of the chain corresponds to 542-637 (CQTYQVICLG…DGMAGDHQYV (96 aa)).

The protein belongs to the DHHC palmitoyltransferase family. AKR/ZDHHC17 subfamily. As to quaternary structure, interacts with dorsal-ventral patterning protein Sog. As to expression, in stage 13-15 embryos, expressed in the central nervous system. At the third instar larval stage, expressed in the ventral nerve cord and is enriched in the neuropil.

Its subcellular location is the golgi apparatus membrane. The protein resides in the presynaptic cell membrane. The catalysed reaction is L-cysteinyl-[protein] + hexadecanoyl-CoA = S-hexadecanoyl-L-cysteinyl-[protein] + CoA. Probable palmitoyltransferase which is required for photoreceptor synaptic transmission and for the correct expression and localization of palmitoylated protein Csp and synaptosomal-associated protein Snap25. Probably palmitoylates Csp. Probably also palmitoylates the dorsal-ventral patterning protein Sog and promotes its secretion and activity and the stabilization of the membrane-bound form. Required for synaptic vesicle exocytosis. This is Palmitoyltransferase Hip14 from Drosophila melanogaster (Fruit fly).